The chain runs to 306 residues: Ribosomal protein L11 methyltransferase (306 aa).

Residues T154, G179, D201, and N242 each contribute to the S-adenosyl-L-methionine site.

The protein belongs to the methyltransferase superfamily. PrmA family.

The protein localises to the cytoplasm. The catalysed reaction is L-lysyl-[protein] + 3 S-adenosyl-L-methionine = N(6),N(6),N(6)-trimethyl-L-lysyl-[protein] + 3 S-adenosyl-L-homocysteine + 3 H(+). In terms of biological role, methylates ribosomal protein L11. The sequence is that of Ribosomal protein L11 methyltransferase from Xylella fastidiosa (strain Temecula1 / ATCC 700964).